We begin with the raw amino-acid sequence, 1254 residues long: Structural polyprotein (1254 aa).

The interval 1-33 (MFPFQPMYPMQPMPYRNPFAAPRRPWFPRTDPF) is necessary for nucleocapsid assembly and virus assembly. The host transcription inhibition stretch occupies residues 33 to 68 (FLAMQVQELTRSMANLTFKQRRDAPPEGPSAKKPKK). The Supraphysiological nuclear export signal motif lies at 41–48 (LTRSMANL). The tract at residues 45–119 (MANLTFKQRR…KKPGKRQRMV (75 aa)) is disordered. The short motif at 64-68 (KKPKK) is the Nuclear localization signal element. Basic residues predominate over residues 80-92 (GKKKKNQGKKKAK). A binding to the viral RNA region spans residues 91 to 127 (AKTGPPNPKAQNGNKKKTNKKPGKRQRMVMKLESDKT). A phosphothreonine mark is found at Thr93 and Thr108. Positions 104-118 (NKKKTNKKPGKRQRM) are enriched in basic residues. The interval 112–126 (PGKRQRMVMKLESDK) is ribosome-binding. Position 124 is a phosphoserine (Ser124). One can recognise a Peptidase S3 domain in the interval 126-275 (KTFPIMLEGK…KYTPENCEQW (150 aa)). The residue at position 127 (Thr127) is a Phosphothreonine. Residues His152, Asp174, and Ser226 each act as charge relay system in the active site. Residues 276–287 (SLVTTMCLLANV) are functions as an uncleaved signal peptide for the precursor of protein E3/E2. The Extracellular segment spans residues 276 to 701 (SLVTTMCLLA…HYYHRYPMST (426 aa)). 3 N-linked (GlcNAc...) asparagine; by host glycosylation sites follow: Asn286, Asn546, and Asn652. Residues 702-722 (ILGLSICAAIATVSVAASTWL) traverse the membrane as a helical segment. The Cytoplasmic portion of the chain corresponds to 723–757 (FCRSRVACLTPYRLTPNARIPFCLAVLCCARTARA). S-palmitoyl cysteine; by host attachment occurs at residues Cys730, Cys750, and Cys751. Topologically, residues 758–772 (ETTWESLDHLWNNNQ) are extracellular. Residues 773-793 (QMFWIQLLIPLAALIVVTRLL) form a helical membrane-spanning segment. At 794-795 (RC) the chain is on the cytoplasmic side. A helical membrane pass occupies residues 796-816 (VCCVVPFLVMAGAAAPAYEHA). The Extracellular portion of the chain corresponds to 817–1224 (TTMPSQAGIS…SKTAWTWLTS (408 aa)). Disulfide bonds link Cys861-Cys926, Cys874-Cys906, Cys875-Cys908, and Cys880-Cys890. The tract at residues 896 to 913 (VYPFMWGGAYCFCDTENT) is E1 fusion peptide loop. Asn946 is a glycosylation site (N-linked (GlcNAc...) asparagine; by host). 4 disulfides stabilise this stretch: Cys1071/Cys1083, Cys1113/Cys1188, Cys1118/Cys1192, and Cys1140/Cys1182. Residues 1225–1245 (LLGGSAVIIIIGLVLATIVAM) traverse the membrane as a helical segment. Topologically, residues 1246–1254 (YVLTNQKHN) are cytoplasmic.

Homodimer. Homomultimer. Interacts with host karyopherin KPNA4; this interaction allows the nuclear import of the viral capsid protein. Interacts with spike glycoprotein E2. Interacts with host IRAK1; the interaction leads to inhibition of IRAK1-dependent signaling. Part of a tetrameric complex composed of host CRM1, host importin alpha/beta dimer and the viral capsid; this complex blocks the receptor-mediated transport through the nuclear pore. Interacts with host phosphatase PPP1CA; this interaction dephosphorylates the capsid protein, which increases its ability to bind to the viral genome. In terms of assembly, the precursor of protein E3/E2 and E1 form a heterodimer shortly after synthesis. As to quaternary structure, interacts with spike glycoprotein E2. The precursor of protein E3/E2 and E1 form a heterodimer shortly after synthesis. Processing of the precursor of protein E3/E2 into E2 and E3 results in a heterodimer of the spike glycoproteins E2 and E1. Spike at virion surface are constituted of three E2-E1 heterodimers. After target cell attachment and endocytosis, E1 change conformation to form homotrimers. Interacts with 6K protein. Interacts (via fusion peptide loop) with host LDLRAD3 (via domain LDL-receptor class A 1); this interaction mediates viral entry to the host cell. 2 adjacent E2-E1 heterodimers in the trimeric spike interact with host LDLRAD3. Interacts with spike glycoprotein E1. Processing of the precursor of protein E3/E2 into E2 and E3 results in a heterodimer of the spike glycoproteins E2 and E1. Spike at virion surface are constituted of a trimer of E2-E1 heterodimers. Interacts with 6K protein. Interacts with host LDLRAD3 (via domain LDL-receptor class A 1); this interaction mediates viral entry to the host cell. 2 adjacent E2-E1 heterodimers in the trimeric spike interact with host LDLRAD3. In terms of assembly, oligomer. Interacts with spike glycoprotein E1. Interacts with spike glycoprotein E2. In terms of processing, structural polyprotein: Specific enzymatic cleavages in vivo yield mature proteins. Capsid protein is auto-cleaved during polyprotein translation, unmasking a signal peptide at the N-terminus of the precursor of E3/E2. The remaining polyprotein is then targeted to the host endoplasmic reticulum, where host signal peptidase cleaves it into pE2, 6K and E1 proteins. pE2 is further processed to mature E3 and E2 by host furin in trans-Golgi vesicle. Phosphorylated on serine and threonine residues. Post-translationally, palmitoylated via thioester bonds. These palmitoylations may induce disruption of the C-terminus transmembrane. This would result in the reorientation of E2 C-terminus from lumenal to cytoplasmic side. In terms of processing, N-glycosylated. Palmitoylated via thioester bonds.

The protein resides in the virion. It localises to the host cytoplasm. The protein localises to the host cell membrane. Its subcellular location is the host nucleus. It is found in the virion membrane. The enzyme catalyses Autocatalytic release of the core protein from the N-terminus of the togavirus structural polyprotein by hydrolysis of a -Trp-|-Ser- bond.. Forms an icosahedral capsid with a T=4 symmetry composed of 240 copies of the capsid protein surrounded by a lipid membrane through which penetrate 80 spikes composed of trimers of E1-E2 heterodimers. The capsid protein binds to the viral RNA genome at a site adjacent to a ribosome binding site for viral genome translation following genome release. Possesses a protease activity that results in its autocatalytic cleavage from the nascent structural protein. Following its self-cleavage, the capsid protein transiently associates with ribosomes, and within several minutes the protein binds to viral RNA and rapidly assembles into icosahedric core particles. The resulting nucleocapsid eventually associates with the cytoplasmic domain of the spike glycoprotein E2 at the cell membrane, leading to budding and formation of mature virions. In case of infection, new virions attach to target cells and after clathrin-mediated endocytosis their membrane fuses with the host endosomal membrane. This leads to the release of the nucleocapsid into the cytoplasm, followed by an uncoating event necessary for the genomic RNA to become accessible. The uncoating might be triggered by the interaction of capsid proteins with ribosomes. Binding of ribosomes would release the genomic RNA since the same region is genomic RNA-binding and ribosome-binding. Specifically inhibits interleukin-1 receptor-associated kinase 1/IRAK1-dependent signaling during viral entry, representing a means by which the alphaviruses may evade innate immune detection and activation prior to viral gene expression. Inhibits host transcription. Forms a tetrameric complex with XPO1/CRM1 and the nuclear import receptor importin. This complex blocks the central channel of host nuclear pores thereby inhibiting the receptor-mediated nuclear transport and thus the host mRNA and rRNA transcription. The inhibition of transcription is linked to a cytopathic effect on the host cell. Functionally, provides the signal sequence for the translocation of the precursor of protein E3/E2 to the host endoplasmic reticulum. Furin-cleaved E3 remains associated with spike glycoprotein E1 and mediates pH protection of the latter during the transport via the secretory pathway. After virion release from the host cell, the assembly protein E3 is gradually released in the extracellular space. Its function is as follows. Plays a role in viral attachment to target host cell, by binding to the cell receptor LDLRAD3. Synthesized as a p62 precursor which is processed by furin at the cell membrane just before virion budding, giving rise to E2-E1 heterodimer. The p62-E1 heterodimer is stable, whereas E2-E1 is unstable and dissociate at low pH. p62 is processed at the last step, presumably to avoid E1 fusion activation before its final export to cell surface. E2 C-terminus contains a transitory transmembrane that would be disrupted by palmitoylation, resulting in reorientation of the C-terminal tail from lumenal to cytoplasmic side. This step is critical since E2 C-terminus is involved in budding by interacting with capsid proteins. This release of E2 C-terminus in cytoplasm occurs lately in protein export, and precludes premature assembly of particles at the endoplasmic reticulum membrane. In terms of biological role, acts as a viroporin that participates in virus glycoprotein processing and transport to the plasma membrane, cell permeabilization and budding of viral particles. Disrupts the calcium homeostasis of the cell, probably at the endoplasmic reticulum level. This leads to cytoplasmic calcium elevation. Because of its lipophilic properties, the 6K protein is postulated to influence the selection of lipids that interact with the transmembrane domains of the glycoproteins, which, in turn, affects the deformability of the bilayer required for the extreme curvature that occurs as budding proceeds. Present in low amount in virions, about 3% compared to viral glycoproteins. Class II viral fusion protein. Fusion activity is inactive as long as E1 is bound to E2 in mature virion. After virus attachment to cell receptor LDLRAD3 and endocytosis, acidification of the endosome induce dissociation of E1/E2 heterodimer and concomitant trimerization of the E1 subunits. This E1 trimer is fusion active, and promotes release of viral nucleocapsid in cytoplasm after endosome and viral membrane fusion. Efficient fusion requires the presence of cholesterol and sphingolipid in the target membrane. The polypeptide is Structural polyprotein (Bos taurus (Bovine)).